We begin with the raw amino-acid sequence, 184 residues long: Peptidyl-tRNA hydrolase (184 aa).

Residue tyrosine 14 participates in tRNA binding. The active-site Proton acceptor is the histidine 19. TRNA-binding residues include phenylalanine 60 and asparagine 62.

This sequence belongs to the PTH family. In terms of assembly, monomer.

It is found in the cytoplasm. The enzyme catalyses an N-acyl-L-alpha-aminoacyl-tRNA + H2O = an N-acyl-L-amino acid + a tRNA + H(+). In terms of biological role, hydrolyzes ribosome-free peptidyl-tRNAs (with 1 or more amino acids incorporated), which drop off the ribosome during protein synthesis, or as a result of ribosome stalling. Functionally, catalyzes the release of premature peptidyl moieties from peptidyl-tRNA molecules trapped in stalled 50S ribosomal subunits, and thus maintains levels of free tRNAs and 50S ribosomes. This is Peptidyl-tRNA hydrolase from Mesomycoplasma hyopneumoniae (strain 7448) (Mycoplasma hyopneumoniae).